The primary structure comprises 154 residues: Myoglobin (154 aa).

Residues Gly-2–Lys-148 form the Globin domain. Ser-4 bears the Phosphoserine mark. His-65 serves as a coordination point for nitrite. His-65 is an O2 binding site. The residue at position 68 (Thr-68) is a Phosphothreonine. Position 94 (His-94) interacts with heme b.

It belongs to the globin family. Monomeric.

Its subcellular location is the cytoplasm. The protein resides in the sarcoplasm. The enzyme catalyses Fe(III)-heme b-[protein] + nitric oxide + H2O = Fe(II)-heme b-[protein] + nitrite + 2 H(+). It carries out the reaction H2O2 + AH2 = A + 2 H2O. Its function is as follows. Monomeric heme protein which primary function is to store oxygen and facilitate its diffusion within muscle tissues. Reversibly binds oxygen through a pentacoordinated heme iron and enables its timely and efficient release as needed during periods of heightened demand. Depending on the oxidative conditions of tissues and cells, and in addition to its ability to bind oxygen, it also has a nitrite reductase activity whereby it regulates the production of bioactive nitric oxide. Under stress conditions, like hypoxia and anoxia, it also protects cells against reactive oxygen species thanks to its pseudoperoxidase activity. This is Myoglobin (MB) from Ondatra zibethicus (Muskrat).